Reading from the N-terminus, the 379-residue chain is UDP-4-amino-4-deoxy-L-arabinose--oxoglutarate aminotransferase (379 aa).

Lys-182 carries the post-translational modification N6-(pyridoxal phosphate)lysine.

It belongs to the DegT/DnrJ/EryC1 family. ArnB subfamily. As to quaternary structure, homodimer. It depends on pyridoxal 5'-phosphate as a cofactor.

It catalyses the reaction UDP-4-amino-4-deoxy-beta-L-arabinose + 2-oxoglutarate = UDP-beta-L-threo-pentopyranos-4-ulose + L-glutamate. It functions in the pathway nucleotide-sugar biosynthesis; UDP-4-deoxy-4-formamido-beta-L-arabinose biosynthesis; UDP-4-deoxy-4-formamido-beta-L-arabinose from UDP-alpha-D-glucuronate: step 2/3. The protein operates within bacterial outer membrane biogenesis; lipopolysaccharide biosynthesis. Catalyzes the conversion of UDP-4-keto-arabinose (UDP-Ara4O) to UDP-4-amino-4-deoxy-L-arabinose (UDP-L-Ara4N). The modified arabinose is attached to lipid A and is required for resistance to polymyxin and cationic antimicrobial peptides. The chain is UDP-4-amino-4-deoxy-L-arabinose--oxoglutarate aminotransferase from Salmonella paratyphi A (strain ATCC 9150 / SARB42).